We begin with the raw amino-acid sequence, 282 residues long: Heat stress transcription factor A-6a (282 aa).

A DNA-binding region spans residues 17–111 (PTAFLTKTYN…LLKNIKRRKT (95 aa)). A hydrophobic repeat HR-A/B region spans residues 111–177 (TSSQTQTQSL…MMMNFLLKKI (67 aa)). The Bipartite nuclear localization signal motif lies at 175-190 (KKIKKPSFLQSLRKRN). Positions 261–270 (EGIWKGFVLS) match the AHA motif.

Belongs to the HSF family. Class A subfamily. In terms of assembly, homotrimer. In terms of processing, exhibits temperature-dependent phosphorylation.

The protein localises to the nucleus. Transcriptional activator that specifically binds DNA sequence 5'-AGAAnnTTCT-3' known as heat shock promoter elements (HSE). The chain is Heat stress transcription factor A-6a (HSFA6A) from Arabidopsis thaliana (Mouse-ear cress).